We begin with the raw amino-acid sequence, 330 residues long: uncharacterized protein (330 aa).

Residue His-257 is part of the active site.

It belongs to the IUNH family.

This is an uncharacterized protein from Schizosaccharomyces pombe (strain 972 / ATCC 24843) (Fission yeast).